The primary structure comprises 263 residues: Transcription factor bHLH27 (263 aa).

Residues 32–47 are compositionally biased toward low complexity; it reads EAFSGSGESSSPDGAA. Positions 32–61 are disordered; it reads EAFSGSGESSSPDGAATSPASSKNVVSERN. Positions 49-58 are enriched in polar residues; it reads SPASSKNVVS. A bHLH domain is found at 50–99; it reads PASSKNVVSERNRRQKLNQRLFALRSVVPNISKLDKASVIKDSIDYMQEL.

Homodimer. Expressed constitutively in roots, leaves, stems, and flowers.

The protein localises to the nucleus. The polypeptide is Transcription factor bHLH27 (BHLH27) (Arabidopsis thaliana (Mouse-ear cress)).